A 388-amino-acid chain; its full sequence is Na(+)/H(+) antiporter NhaA (388 aa).

Residues 1–11 (MKHLHRFFSSD) are Cytoplasmic-facing. Residues 12–31 (ASGGIILIIAAVLAMIMANS) form a helical membrane-spanning segment. The Periplasmic portion of the chain corresponds to 32–58 (GATSGWYHDFLETPVQLRVGTLEINKN). Residues 59–80 (MLLWINDALMAVFFLLVGLEVK) form a helical membrane-spanning segment. Residues 81 to 96 (RELMQGSLASLRQAAF) lie on the Cytoplasmic side of the membrane. The chain crosses the membrane as a helical span at residues 97 to 116 (PVIAAIGGMIVPALLYLAFN). Topologically, residues 117-122 (YADPIT) are periplasmic. The helical transmembrane segment at 123 to 130 (REGWAIPA) threads the bilayer. Residues 131–154 (ATDIAFALGVLALLGSRVPLALKI) are Cytoplasmic-facing. The helical transmembrane segment at 155-176 (FLMALAIIDDLGAIIIIALFYT) threads the bilayer. The Periplasmic segment spans residues 177-180 (NDLS). A helical transmembrane segment spans residues 181–200 (MASLGVAAVAIAVLVVLNLC). The Cytoplasmic segment spans residues 201 to 204 (GVRR). The chain crosses the membrane as a helical span at residues 205–222 (TGVYILVGVVLWTAVLKS). A topological domain (periplasmic) is located at residue Gly223. A helical membrane pass occupies residues 224-236 (VHATLAGVIVGFF). Over 237–253 (IPLKEKHGRSPAKRLEH) the chain is Cytoplasmic. A helical membrane pass occupies residues 254 to 272 (VLHPWVAYLILPLFAFANA). Topologically, residues 273 to 286 (GVSLQGVTLEGLTS) are periplasmic. A helical transmembrane segment spans residues 287–310 (ILPLGIIAGLLIGKPLGISLFCWL). Over 311 to 339 (ALRLKLAHLPEGTTYQQIMAVGILCGIGF) the chain is Cytoplasmic. The helical transmembrane segment at 340–350 (TMSIFIASLAF) threads the bilayer. The Periplasmic portion of the chain corresponds to 351 to 357 (GSVDPEL). Residues 358-380 (INWAKLGILVGSISSAVIGYSWL) form a helical membrane-spanning segment. At 381 to 388 (RVRLRPSV) the chain is on the cytoplasmic side.

Belongs to the NhaA Na(+)/H(+) (TC 2.A.33) antiporter family.

It localises to the cell inner membrane. It catalyses the reaction Na(+)(in) + 2 H(+)(out) = Na(+)(out) + 2 H(+)(in). Functionally, na(+)/H(+) antiporter that extrudes sodium in exchange for external protons. In Escherichia coli O1:K1 / APEC, this protein is Na(+)/H(+) antiporter NhaA.